The chain runs to 403 residues: Ribosomal RNA large subunit methyltransferase I (403 aa).

Positions 9 to 88 (YPRLVLSKGR…ESIDIAFFTR (80 aa)) constitute a PUA domain.

This sequence belongs to the methyltransferase superfamily. RlmI family.

It is found in the cytoplasm. The enzyme catalyses cytidine(1962) in 23S rRNA + S-adenosyl-L-methionine = 5-methylcytidine(1962) in 23S rRNA + S-adenosyl-L-homocysteine + H(+). Functionally, specifically methylates the cytosine at position 1962 (m5C1962) of 23S rRNA. In Salmonella typhi, this protein is Ribosomal RNA large subunit methyltransferase I.